A 262-amino-acid polypeptide reads, in one-letter code: Adenosylcobinamide-GDP ribazoletransferase (262 aa).

7 helical membrane passes run 37 to 57, 58 to 78, 112 to 132, 139 to 159, 183 to 203, 205 to 225, and 237 to 257; these read SMPLAGAAIGALAAGTYALCS, MFSFGTPLFLALFLLWLGIWL, VGAFAVLSLACLLSFRWLFLY, IPPALFVAIPLLSRSGAAWLL, AVWALVLAFLALSLLLVFGGV, VWTSAALAVAMALLALGAKPW, and VLGALIEGGETLLWGVVWLLH.

Belongs to the CobS family. Requires Mg(2+) as cofactor.

It is found in the cell membrane. It catalyses the reaction alpha-ribazole + adenosylcob(III)inamide-GDP = adenosylcob(III)alamin + GMP + H(+). It carries out the reaction alpha-ribazole 5'-phosphate + adenosylcob(III)inamide-GDP = adenosylcob(III)alamin 5'-phosphate + GMP + H(+). It participates in cofactor biosynthesis; adenosylcobalamin biosynthesis; adenosylcobalamin from cob(II)yrinate a,c-diamide: step 7/7. Joins adenosylcobinamide-GDP and alpha-ribazole to generate adenosylcobalamin (Ado-cobalamin). Also synthesizes adenosylcobalamin 5'-phosphate from adenosylcobinamide-GDP and alpha-ribazole 5'-phosphate. This chain is Adenosylcobinamide-GDP ribazoletransferase, found in Geobacillus thermodenitrificans (strain NG80-2).